The primary structure comprises 222 residues: Flagellar L-ring protein (222 aa).

Positions 1 to 18 are cleaved as a signal peptide; sequence MKTTRAIAMLGLLLGLAA. Residue Cys19 is the site of N-palmitoyl cysteine attachment. Residue Cys19 is the site of S-diacylglycerol cysteine attachment.

Belongs to the FlgH family. The basal body constitutes a major portion of the flagellar organelle and consists of four rings (L,P,S, and M) mounted on a central rod.

Its subcellular location is the cell outer membrane. The protein resides in the bacterial flagellum basal body. Functionally, assembles around the rod to form the L-ring and probably protects the motor/basal body from shearing forces during rotation. In Thiobacillus denitrificans (strain ATCC 25259 / T1), this protein is Flagellar L-ring protein.